The following is a 347-amino-acid chain: MQVTRIIPDVPSFLASMMTFDTWSILFMVVQSLVIFLVVVIVAAMMIIYERRMLALWQDRYGPNRVGPFGSLQLVADMLKIFFKEDWTPNFTDKFMFTLAPAVAMFTALASFAIIPISPTLGVADWDIGILFFFAMAGIAVYAVLFGGWASANKFSLLGGLRSAAQTISYEVFLGLSLMGVVALTGSFNLRAIVEAQADGWYIIPQFFGFLTFVVAGVAVTHRHPFDQPEAEQELAEGYHVEYSGMKFGMFFIGEYVNVVLISALMTCLFFGGWLAPFNLDIPFIPPAFWFMIKTLFFMTMFVLARGSLMRPRYDQVMNFGWKVCLPVTLINLLVTAAVILIFSPTL.

A run of 8 helical transmembrane segments spans residues 25–45 (ILFM…VAAM), 95–115 (FMFT…FAII), 128–148 (IGIL…LFGG), 168–188 (ISYE…TGSF), 200–220 (GWYI…GVAV), 251–271 (FFIG…CLFF), 284–304 (FIPP…MFVL), and 324–344 (VCLP…LIFS).

Belongs to the complex I subunit 1 family. NDH-1 is composed of 14 different subunits. Subunits NuoA, H, J, K, L, M, N constitute the membrane sector of the complex.

The protein localises to the cell inner membrane. The enzyme catalyses a quinone + NADH + 5 H(+)(in) = a quinol + NAD(+) + 4 H(+)(out). Its function is as follows. NDH-1 shuttles electrons from NADH, via FMN and iron-sulfur (Fe-S) centers, to quinones in the respiratory chain. The immediate electron acceptor for the enzyme in this species is believed to be ubiquinone. Couples the redox reaction to proton translocation (for every two electrons transferred, four hydrogen ions are translocated across the cytoplasmic membrane), and thus conserves the redox energy in a proton gradient. This subunit may bind ubiquinone. This chain is NADH-quinone oxidoreductase subunit H, found in Psychrobacter cryohalolentis (strain ATCC BAA-1226 / DSM 17306 / VKM B-2378 / K5).